The chain runs to 150 residues: Ribosome maturation factor RimP (150 aa).

The protein belongs to the RimP family.

It localises to the cytoplasm. Its function is as follows. Required for maturation of 30S ribosomal subunits. The polypeptide is Ribosome maturation factor RimP (Thermotoga petrophila (strain ATCC BAA-488 / DSM 13995 / JCM 10881 / RKU-1)).